The sequence spans 251 residues: Triosephosphate isomerase (251 aa).

Asparagine 9–lysine 11 contacts substrate. The Electrophile role is filled by histidine 95. The Proton acceptor role is filled by glutamate 167. Residues glycine 173, serine 213, and glycine 234 to glycine 235 each bind substrate.

This sequence belongs to the triosephosphate isomerase family. Homodimer.

It localises to the cytoplasm. The enzyme catalyses D-glyceraldehyde 3-phosphate = dihydroxyacetone phosphate. The protein operates within carbohydrate biosynthesis; gluconeogenesis. It functions in the pathway carbohydrate degradation; glycolysis; D-glyceraldehyde 3-phosphate from glycerone phosphate: step 1/1. Functionally, involved in the gluconeogenesis. Catalyzes stereospecifically the conversion of dihydroxyacetone phosphate (DHAP) to D-glyceraldehyde-3-phosphate (G3P). This chain is Triosephosphate isomerase, found in Lactobacillus gasseri (strain ATCC 33323 / DSM 20243 / BCRC 14619 / CIP 102991 / JCM 1131 / KCTC 3163 / NCIMB 11718 / NCTC 13722 / AM63).